The chain runs to 426 residues: Enolase (426 aa).

Q165 is a (2R)-2-phosphoglycerate binding site. The active-site Proton donor is E209. 3 residues coordinate Mg(2+): D244, E287, and D313. (2R)-2-phosphoglycerate is bound by residues K338, R367, S368, and K389. K338 (proton acceptor) is an active-site residue.

This sequence belongs to the enolase family. Mg(2+) serves as cofactor.

Its subcellular location is the cytoplasm. The protein localises to the secreted. It localises to the cell surface. It catalyses the reaction (2R)-2-phosphoglycerate = phosphoenolpyruvate + H2O. The protein operates within carbohydrate degradation; glycolysis; pyruvate from D-glyceraldehyde 3-phosphate: step 4/5. Functionally, catalyzes the reversible conversion of 2-phosphoglycerate (2-PG) into phosphoenolpyruvate (PEP). It is essential for the degradation of carbohydrates via glycolysis. This Methanococcus vannielii (strain ATCC 35089 / DSM 1224 / JCM 13029 / OCM 148 / SB) protein is Enolase.